The primary structure comprises 45 residues: Photosystem II reaction center protein K (45 aa).

Residues 1–8 (MTQIFLIG) constitute a propeptide that is removed on maturation. The chain crosses the membrane as a helical span at residues 20-40 (IVDVLPIIPVLFLLLAFVWQA).

This sequence belongs to the PsbK family. PSII is composed of 1 copy each of membrane proteins PsbA, PsbB, PsbC, PsbD, PsbE, PsbF, PsbH, PsbI, PsbJ, PsbK, PsbL, PsbM, PsbT, PsbX, PsbY, PsbZ, Psb30/Ycf12, at least 3 peripheral proteins of the oxygen-evolving complex and a large number of cofactors. It forms dimeric complexes.

Its subcellular location is the plastid. It is found in the chloroplast thylakoid membrane. Its function is as follows. One of the components of the core complex of photosystem II (PSII). PSII is a light-driven water:plastoquinone oxidoreductase that uses light energy to abstract electrons from H(2)O, generating O(2) and a proton gradient subsequently used for ATP formation. It consists of a core antenna complex that captures photons, and an electron transfer chain that converts photonic excitation into a charge separation. This chain is Photosystem II reaction center protein K, found in Ostreococcus tauri.